The chain runs to 562 residues: Tripeptidyl-peptidase 1 (562 aa).

The N-terminal stretch at 1–19 (MGLQARLLGLLALVIAGKC) is a signal peptide. The propeptide at 20-194 (TYNPEPDQRW…PEPQQVGTVS (175 aa)) is removed in mature form. Cys-111 and Cys-122 are disulfide-bonded. Residues 198-562 (GVTPSVLRQR…PALLKTLLNP (365 aa)) enclose the Peptidase S53 domain. Asn-209 carries N-linked (GlcNAc...) asparagine glycosylation. Asn-221 carries an N-linked (GlcNAc...) (high mannose) asparagine glycan. Residues Glu-271 and Asp-275 each act as charge relay system in the active site. Residues Asn-285, Asn-312, and Asn-442 are each glycosylated (N-linked (GlcNAc...) asparagine). Intrachain disulfides connect Cys-364/Cys-525 and Cys-521/Cys-536. Ser-474 acts as the Charge relay system in catalysis. Asp-516 and Val-517 together coordinate Ca(2+). 3 residues coordinate Ca(2+): Gly-538, Gly-540, and Asp-542.

In terms of assembly, monomer. Interacts with CLN5. Interacts with CLN3. Ca(2+) is required as a cofactor. Post-translationally, activated by autocatalytic proteolytical processing upon acidification. N-glycosylation is required for processing and activity.

The protein resides in the lysosome. Its subcellular location is the melanosome. The enzyme catalyses Release of an N-terminal tripeptide from a polypeptide, but also has endopeptidase activity.. In terms of biological role, lysosomal serine protease with tripeptidyl-peptidase I activity. May act as a non-specific lysosomal peptidase which generates tripeptides from the breakdown products produced by lysosomal proteinases. Requires substrates with an unsubstituted N-terminus. This chain is Tripeptidyl-peptidase 1 (Tpp1), found in Mus musculus (Mouse).